A 285-amino-acid polypeptide reads, in one-letter code: Hsp90 co-chaperone Cdc37-like 1 (285 aa).

The disordered stretch occupies residues 34–54 (LHNSESMDQEQAMAQAELSEL). A coiled-coil region spans residues 35–73 (HNSESMDQEQAMAQAELSELQRSEEEWRRKEAALSQGEN).

The protein belongs to the CDC37 family. Forms complexes with Hsp70 and Hsp90.

It localises to the cytoplasm. Functionally, co-chaperone that binds to numerous proteins and promotes their interaction with Hsp70 and Hsp90. The sequence is that of Hsp90 co-chaperone Cdc37-like 1 (cdc37l1) from Xenopus tropicalis (Western clawed frog).